Reading from the N-terminus, the 640-residue chain is Threonine--tRNA ligase (640 aa).

Residues 1–60 enclose the TGS domain; sequence MKITFPDGAVKEFEPGVSTADIAASISPGLKKKALAGKLNGELLDLVTPIHEDGAIEIVT. The catalytic stretch occupies residues 241 to 538; that stretch reads DHRKLGKELD…LIEEYKGAFP (298 aa). Zn(2+) contacts are provided by Cys334, His385, and His515.

This sequence belongs to the class-II aminoacyl-tRNA synthetase family. Homodimer. It depends on Zn(2+) as a cofactor.

Its subcellular location is the cytoplasm. The enzyme catalyses tRNA(Thr) + L-threonine + ATP = L-threonyl-tRNA(Thr) + AMP + diphosphate + H(+). Functionally, catalyzes the attachment of threonine to tRNA(Thr) in a two-step reaction: L-threonine is first activated by ATP to form Thr-AMP and then transferred to the acceptor end of tRNA(Thr). Also edits incorrectly charged L-seryl-tRNA(Thr). In Listeria monocytogenes serotype 4b (strain CLIP80459), this protein is Threonine--tRNA ligase.